Here is a 436-residue protein sequence, read N- to C-terminus: Trigger factor (436 aa).

In terms of domain architecture, PPIase FKBP-type spans 161–255; sequence DDVAIIDFKT…VKEVREKQLP (95 aa).

It belongs to the FKBP-type PPIase family. Tig subfamily.

It localises to the cytoplasm. It carries out the reaction [protein]-peptidylproline (omega=180) = [protein]-peptidylproline (omega=0). In terms of biological role, involved in protein export. Acts as a chaperone by maintaining the newly synthesized protein in an open conformation. Functions as a peptidyl-prolyl cis-trans isomerase. This is Trigger factor from Akkermansia muciniphila (strain ATCC BAA-835 / DSM 22959 / JCM 33894 / BCRC 81048 / CCUG 64013 / CIP 107961 / Muc).